The primary structure comprises 700 residues: Elongation factor G (700 aa).

The tr-type G domain occupies 10-286; the sequence is NKVRNIGIMA…AVIDYLPNPL (277 aa). Residues 19–26, 83–87, and 137–140 contribute to the GTP site; these read AHIDAGKT, DTPGH, and NKMD.

It belongs to the TRAFAC class translation factor GTPase superfamily. Classic translation factor GTPase family. EF-G/EF-2 subfamily.

Its subcellular location is the cytoplasm. Functionally, catalyzes the GTP-dependent ribosomal translocation step during translation elongation. During this step, the ribosome changes from the pre-translocational (PRE) to the post-translocational (POST) state as the newly formed A-site-bound peptidyl-tRNA and P-site-bound deacylated tRNA move to the P and E sites, respectively. Catalyzes the coordinated movement of the two tRNA molecules, the mRNA and conformational changes in the ribosome. This chain is Elongation factor G, found in Rhodococcus opacus (strain B4).